The primary structure comprises 76 residues: ATP synthase subunit c (76 aa).

2 consecutive transmembrane segments (helical) span residues 13–33 (LNVVGYGLAAIGPGIGLGILI) and 55–75 (FLGLAFVEVLALLGFVAAFIF).

Belongs to the ATPase C chain family. In terms of assembly, F-type ATPases have 2 components, F(1) - the catalytic core - and F(0) - the membrane proton channel. F(1) has five subunits: alpha(3), beta(3), gamma(1), delta(1), epsilon(1). F(0) has three main subunits: a(1), b(2) and c(10-14). The alpha and beta chains form an alternating ring which encloses part of the gamma chain. F(1) is attached to F(0) by a central stalk formed by the gamma and epsilon chains, while a peripheral stalk is formed by the delta and b chains.

The protein resides in the cell membrane. F(1)F(0) ATP synthase produces ATP from ADP in the presence of a proton or sodium gradient. F-type ATPases consist of two structural domains, F(1) containing the extramembraneous catalytic core and F(0) containing the membrane proton channel, linked together by a central stalk and a peripheral stalk. During catalysis, ATP synthesis in the catalytic domain of F(1) is coupled via a rotary mechanism of the central stalk subunits to proton translocation. In terms of biological role, key component of the F(0) channel; it plays a direct role in translocation across the membrane. A homomeric c-ring of between 10-14 subunits forms the central stalk rotor element with the F(1) delta and epsilon subunits. The polypeptide is ATP synthase subunit c (Bifidobacterium animalis subsp. lactis (strain AD011)).